Consider the following 417-residue polypeptide: Gamma-glutamyl phosphate reductase (417 aa).

Belongs to the gamma-glutamyl phosphate reductase family.

It is found in the cytoplasm. The enzyme catalyses L-glutamate 5-semialdehyde + phosphate + NADP(+) = L-glutamyl 5-phosphate + NADPH + H(+). It participates in amino-acid biosynthesis; L-proline biosynthesis; L-glutamate 5-semialdehyde from L-glutamate: step 2/2. In terms of biological role, catalyzes the NADPH-dependent reduction of L-glutamate 5-phosphate into L-glutamate 5-semialdehyde and phosphate. The product spontaneously undergoes cyclization to form 1-pyrroline-5-carboxylate. This Klebsiella pneumoniae (strain 342) protein is Gamma-glutamyl phosphate reductase.